The primary structure comprises 352 residues: 26S proteasome regulatory subunit rpn-8 (352 aa).

Positions 16 to 152 (VSVAPLVLLS…TDAYFAVDEI (137 aa)) constitute an MPN domain. Residues 303-352 (NRQQQEENDAKKKEGENGEKKEGADKKEGSPAAANGESKEKENSPKEKKK) are disordered. Composition is skewed to basic and acidic residues over residues 306–331 (QQEENDAKKKEGENGEKKEGADKKEG) and 339–352 (ESKEKENSPKEKKK).

This sequence belongs to the peptidase M67A family.

In terms of biological role, acts as a regulatory subunit of the 26S proteasome which is involved in the ATP-dependent degradation of ubiquitinated proteins. The sequence is that of 26S proteasome regulatory subunit rpn-8 (rpn-8) from Neurospora crassa (strain ATCC 24698 / 74-OR23-1A / CBS 708.71 / DSM 1257 / FGSC 987).